The following is a 246-amino-acid chain: UDP-N-acetyl-D-mannosaminuronic acid transferase (246 aa).

This sequence belongs to the glycosyltransferase 26 family.

The enzyme catalyses UDP-N-acetyl-alpha-D-mannosaminouronate + N-acetyl-alpha-D-glucosaminyl-di-trans,octa-cis-undecaprenyl diphosphate = beta-D-ManNAcA-(1-&gt;4)-alpha-D-GlcNAc-di-trans,octa-cis-undecaprenyl diphosphate + UDP + H(+). Its pathway is bacterial outer membrane biogenesis; enterobacterial common antigen biosynthesis. Catalyzes the synthesis of Und-PP-GlcNAc-ManNAcA (Lipid II), the second lipid-linked intermediate involved in enterobacterial common antigen (ECA) synthesis. This is UDP-N-acetyl-D-mannosaminuronic acid transferase from Escherichia coli (strain K12).